Consider the following 504-residue polypeptide: Topoisomerase I damage affected protein 11 (504 aa).

The interval 32–62 is disordered; sequence RKTGRKIRSASSNGYRLEHHRTSSAGSMHSQ. Residues 179-231 adopt a coiled-coil conformation; that stretch reads ALLQSLATKELELLECKQKIEDLKKQTQHEEQNYTRRARELHELKEQVSKHLD. Threonine 236 is modified (phosphothreonine). Phosphoserine is present on residues serine 244 and serine 286. Disordered regions lie at residues 252–306, 332–377, and 400–504; these read LESR…SKQS, WDDS…SVSR, and DVIT…MTDF. Residues 257–287 show a composition bias toward polar residues; the sequence is ENAGNSSLPSSVSKPKNMGHQSTNQSRSVSP. Residues 290–301 show a composition bias toward basic and acidic residues; that stretch reads IQERRQRDDSSD. Composition is skewed to polar residues over residues 332-359 and 368-377; these read WDDSLSGTPEVQEGTPTSNSESSAQQYD and KSPSQGSVSR. The span at 403 to 421 shows a compositional bias: basic and acidic residues; sequence TDNRCDPVYKSDRQHEQKK. Over residues 470–479 the composition is skewed to basic residues; that stretch reads TREKKSKRSS. A compositionally biased stretch (polar residues) spans 491 to 504; the sequence is DNSSVKNSVEMTDF.

The protein belongs to the TDA11 family.

The protein localises to the cytoplasm. The protein is Topoisomerase I damage affected protein 11 (TDA11) of Saccharomyces cerevisiae (strain Lalvin EC1118 / Prise de mousse) (Baker's yeast).